The primary structure comprises 390 residues: Anhydro-N-acetylmuramic acid kinase (390 aa).

An ATP-binding site is contributed by 9-16 (GTSLDGID).

Belongs to the anhydro-N-acetylmuramic acid kinase family.

The enzyme catalyses 1,6-anhydro-N-acetyl-beta-muramate + ATP + H2O = N-acetyl-D-muramate 6-phosphate + ADP + H(+). It functions in the pathway amino-sugar metabolism; 1,6-anhydro-N-acetylmuramate degradation. The protein operates within cell wall biogenesis; peptidoglycan recycling. Catalyzes the specific phosphorylation of 1,6-anhydro-N-acetylmuramic acid (anhMurNAc) with the simultaneous cleavage of the 1,6-anhydro ring, generating MurNAc-6-P. Is required for the utilization of anhMurNAc either imported from the medium or derived from its own cell wall murein, and thus plays a role in cell wall recycling. The chain is Anhydro-N-acetylmuramic acid kinase from Bacillus cereus (strain B4264).